The chain runs to 246 residues: Probable H/ACA ribonucleoprotein complex subunit 1-like protein (246 aa).

2 disordered regions span residues 1-61 (MSFR…GGYD) and 155-246 (PQVG…TKFD). 2 RGG-box regions span residues 4–59 (RGGR…GRGG) and 161–223 (RGRG…RGRG). Residues 168–180 (RGGDRGRGGDRGR) are compositionally biased toward basic and acidic residues. The segment covering 181–221 (GGFGGRGGGGGGFRGGSRGGFGGGDRGGFRGGRGGDFGGRG) has biased composition (gly residues).

The protein belongs to the GAR1 family. In terms of assembly, component of the small nucleolar ribonucleoprotein particle containing H/ACA-type snoRNAs (H/ACA snoRNPs).

It localises to the nucleus. It is found in the nucleolus. Required for ribosome biogenesis. Part of a complex which catalyzes pseudouridylation of rRNA. This involves the isomerization of uridine such that the ribose is subsequently attached to C5, instead of the normal N1. Pseudouridine ('psi') residues may serve to stabilize the conformation of rRNAs. This chain is Probable H/ACA ribonucleoprotein complex subunit 1-like protein, found in Caenorhabditis briggsae.